The chain runs to 233 residues: Large ribosomal subunit protein uL1 (233 aa).

Belongs to the universal ribosomal protein uL1 family. As to quaternary structure, part of the 50S ribosomal subunit.

In terms of biological role, binds directly to 23S rRNA. The L1 stalk is quite mobile in the ribosome, and is involved in E site tRNA release. Protein L1 is also a translational repressor protein, it controls the translation of the L11 operon by binding to its mRNA. This is Large ribosomal subunit protein uL1 from Shewanella loihica (strain ATCC BAA-1088 / PV-4).